A 104-amino-acid chain; its full sequence is Large ribosomal subunit protein bL21 (104 aa).

This sequence belongs to the bacterial ribosomal protein bL21 family. As to quaternary structure, part of the 50S ribosomal subunit. Contacts protein L20.

Its function is as follows. This protein binds to 23S rRNA in the presence of protein L20. The polypeptide is Large ribosomal subunit protein bL21 (Helicobacter pylori (strain Shi470)).